Consider the following 530-residue polypeptide: Calcium uptake protein 3, mitochondrial (530 aa).

The N-terminal 43 residues, methionine 1 to phenylalanine 43, are a transit peptide targeting the mitochondrion. Residues glycine 92–glycine 115 are disordered. The EF-hand 1 domain occupies lysine 232 to lysine 267. The Ca(2+) site is built by aspartate 245, aspartate 247, asparagine 249, methionine 251, aspartate 253, and glutamate 256. In terms of domain architecture, EF-hand 2; degenerate spans valine 401 to leucine 436. The EF-hand 3 domain maps to phenylalanine 470–arginine 505. Ca(2+) is bound by residues aspartate 483, aspartate 485, aspartate 487, glutamine 489, and glutamate 494.

It belongs to the MICU1 family. MICU3 subfamily. Heterodimer; disulfide-linked; heterodimerizes with MICU1. Component of the uniplex complex, composed of MCU, EMRE/SMDT1, MICU1 and MICU3 in a 4:4:1:1 stoichiometry. In terms of tissue distribution, specifically expressed in the central nervous system and skeletal muscle.

The protein localises to the mitochondrion intermembrane space. It localises to the mitochondrion inner membrane. Its function is as follows. Tissue-specific calcium sensor of the mitochondrial calcium uniporter (MCU) channel, which specifically regulates MCU channel activity in the central nervous system and skeletal muscle. Senses calcium level via its EF-hand domains: compared to MICU1 and MICU2, MICU3 has a higher affinity for calcium. MICU1 and MICU3 form a disulfide-linked heterodimer that stimulates and inhibits MCU activity, depending on the concentration of calcium. At low calcium levels, MICU1 occludes the pore of the MCU channel, preventing mitochondrial calcium uptake. At higher calcium levels, calcium-binding to MICU1 and MICU3 induces a conformational change that weakens MCU-MICU1 interactions and moves the MICU1-MICU3 heterodimer away from the pore, allowing calcium permeation through the MCU channel. The high calcium affinity of MICU3 lowers the calcium threshold necessary for calcium permeation through the MCU channel. The MICU1-MICU3 heterodimer promotes flexibility of neurotransmission in neuronal cells by enhancing mitochondrial calcium uptake in presynapses. It is also required to increase mitochondrial calcium uptake in skeletal muscle cells, thereby increasing ATP production. The protein is Calcium uptake protein 3, mitochondrial of Homo sapiens (Human).